The primary structure comprises 679 residues: Protein hook (679 aa).

One can recognise a Calponin-homology (CH) domain in the interval 5-123; the sequence is NGMYYSLLEW…RLLQLVLGCA (119 aa). Residues 140-627 are a coiled coil; it reads EEELQANIMR…SKTKMSTMEE (488 aa).

This sequence belongs to the hook family. In terms of assembly, homodimer. Interacts with microtubules via its N-terminus.

It is found in the cytoplasm. The protein localises to the cytoskeleton. Its subcellular location is the endosome. The protein resides in the synapse. Involved in endocytic trafficking by stabilizing organelles of the endocytic pathway. Probably acts as a cytoskeletal linker protein required to tether endosome vesicles to the cytoskeleton. Involved in modulation of endocytosis at stages required for down-regulation of membrane proteins that control synapse size. Not involved in synaptic vesicle recycling. Required in R7 cells for boss endocytosis into multivesicular bodies (MVBs). Has a role in regulating adult longevity. This chain is Protein hook, found in Drosophila mojavensis (Fruit fly).